Here is a 206-residue protein sequence, read N- to C-terminus: Small ribosomal subunit protein uS4c (206 aa).

Residues 94–152 (MRLDNIVFRLGMAPTIPAARQLVNHRHILVNDFTVNIPSYSCKLGDKISVQKRFESKTN) form the S4 RNA-binding domain.

The protein belongs to the universal ribosomal protein uS4 family. In terms of assembly, part of the 30S ribosomal subunit. Contacts protein S5. The interaction surface between S4 and S5 is involved in control of translational fidelity.

It localises to the plastid. It is found in the chloroplast. Functionally, one of the primary rRNA binding proteins, it binds directly to 16S rRNA where it nucleates assembly of the body of the 30S subunit. With S5 and S12 plays an important role in translational accuracy. The sequence is that of Small ribosomal subunit protein uS4c (rps4) from Chara vulgaris (Common stonewort).